Here is a 146-residue protein sequence, read N- to C-terminus: Leghemoglobin (146 aa).

The 144-residue stretch at 3 to 146 folds into the Globin domain; sequence AFTEKQEALV…FAAGIKKAYA (144 aa). Nitrated tyrosine is present on residues Tyr-26 and Tyr-31. Residue Ser-46 participates in heme b binding. Ser-46 bears the Phosphoserine mark. His-62 provides a ligand contact to O2. His-93 and Lys-96 together coordinate heme b. A Nitrated tyrosine modification is found at Tyr-134.

The protein belongs to the plant globin family. Monomer. Nitrated mainly at Tyr-31 and, to a lower extent, at Tyr-26 and Tyr-134, in effective nodules and particularly in hypoxic conditions; this mechanism may play a protective role in the symbiosis by buffering toxic peroxynitrite NO(2)(-). Nitration level decrease during nodule senescence. Post-translationally, phosphorylation at Ser-46 disrupts the molecular environment of its porphyrin ring oxygen binding pocket, thus leading to a reduced oxygen consumption and to the delivery of oxygen O(2) to symbiosomes. In terms of tissue distribution, root nodules.

It localises to the cytoplasm. The protein resides in the cytosol. Its subcellular location is the nucleus. Its function is as follows. Leghemoglobin that reversibly binds oxygen O(2) through a pentacoordinated heme iron. In root nodules, facilitates the diffusion of oxygen to the bacteroids while preventing the bacterial nitrogenase from being inactivated by buffering dioxygen, nitric oxide and carbon monoxide, and promoting the formation of reactive oxygen species (ROS, e.g. H(2)O(2)). This role is essential for symbiotic nitrogen fixation (SNF). This Phaseolus vulgaris (Kidney bean) protein is Leghemoglobin.